The primary structure comprises 72 residues: NAD(P)H-quinone oxidoreductase subunit O (72 aa).

Belongs to the complex I NdhO subunit family. In terms of assembly, NDH-1 can be composed of about 15 different subunits; different subcomplexes with different compositions have been identified which probably have different functions.

The protein localises to the cellular thylakoid membrane. It catalyses the reaction a plastoquinone + NADH + (n+1) H(+)(in) = a plastoquinol + NAD(+) + n H(+)(out). The enzyme catalyses a plastoquinone + NADPH + (n+1) H(+)(in) = a plastoquinol + NADP(+) + n H(+)(out). Its function is as follows. NDH-1 shuttles electrons from an unknown electron donor, via FMN and iron-sulfur (Fe-S) centers, to quinones in the respiratory and/or the photosynthetic chain. The immediate electron acceptor for the enzyme in this species is believed to be plastoquinone. Couples the redox reaction to proton translocation, and thus conserves the redox energy in a proton gradient. Cyanobacterial NDH-1 also plays a role in inorganic carbon-concentration. This Crocosphaera subtropica (strain ATCC 51142 / BH68) (Cyanothece sp. (strain ATCC 51142)) protein is NAD(P)H-quinone oxidoreductase subunit O.